The chain runs to 363 residues: RNA polymerase I-specific transcription initiation factor RRN5 (363 aa).

The segment at 301-344 (LSRRDAPPVHQDENQENQENQENQEQDNTASEGESEAERDEIDE) is disordered. Over residues 302-313 (SRRDAPPVHQDE) the composition is skewed to basic and acidic residues. Over residues 317–328 (NQENQENQEQDN) the composition is skewed to low complexity. Acidic residues predominate over residues 333–344 (GESEAERDEIDE).

In terms of assembly, component of the UAF (upstream activation factor) complex which consists of UAF30, RRN5, RRN9, RRN10, and histones H3 and H4.

The protein localises to the nucleus. It localises to the nucleolus. In terms of biological role, component of the UAF (upstream activation factor) complex which interacts with the upstream element of the RNA polymerase I promoter and forms a stable preinitiation complex. Together with SPT15/TBP UAF seems to stimulate basal transcription to a fully activated level. This chain is RNA polymerase I-specific transcription initiation factor RRN5 (RRN5), found in Saccharomyces cerevisiae (strain ATCC 204508 / S288c) (Baker's yeast).